Reading from the N-terminus, the 151-residue chain is Deoxyuridine 5'-triphosphate nucleotidohydrolase (151 aa).

Substrate contacts are provided by residues 70-72 (RSG), Asn-83, 87-89 (LID), and Met-97.

It belongs to the dUTPase family. Requires Mg(2+) as cofactor.

The catalysed reaction is dUTP + H2O = dUMP + diphosphate + H(+). It participates in pyrimidine metabolism; dUMP biosynthesis; dUMP from dCTP (dUTP route): step 2/2. In terms of biological role, this enzyme is involved in nucleotide metabolism: it produces dUMP, the immediate precursor of thymidine nucleotides and it decreases the intracellular concentration of dUTP so that uracil cannot be incorporated into DNA. In Pseudomonas aeruginosa (strain LESB58), this protein is Deoxyuridine 5'-triphosphate nucleotidohydrolase.